The sequence spans 448 residues: MSLDLLLRGAVLVTPEGERRADLGIVGGQIAELTDEIATPAAQTLDVSGLHVFPGVLDDHVHLNEPGRTHWEGFETGTQALAAGGATSFLDMPLNSSPPVLTRERFEDKARLGEEKSLIDFGLWGGLTPLNLDQLDDLAECGVIGLKAFMSHSGLDEFPAADDLTLYEGMRTAKRHGLVVATHAESNEFTRRLTETARAQGKSGVRDYLESRPVVTELEAVQRALLFAQDTGAALHLVHVSSGAAVALAYEGKQKGIDVTIETCPHYLHFTGEDVERVGAALKCAPPLRDPAVQEELWRELLAGHIDTVGSDHSPAPPDMKTSEDFFSLWGGISGAQSTLNVMLEDGYAQRGLPLEIIAALLALNPAQRFGLPQKGRLAVGADADFALVALGEKFTLDTLYDRWQQNPYRGQSFQGRVHATYLRGQPVYQNGEFTGTPRGRLLRPRSL.

Residues His-60, His-62, Lys-147, His-183, His-239, and Asp-312 each contribute to the Zn(2+) site. Lys-147 is subject to N6-carboxylysine.

It belongs to the metallo-dependent hydrolases superfamily. Allantoinase family. In terms of assembly, homotetramer. Zn(2+) is required as a cofactor. In terms of processing, carboxylation allows a single lysine to coordinate two zinc ions.

The enzyme catalyses (S)-allantoin + H2O = allantoate + H(+). It functions in the pathway nitrogen metabolism; (S)-allantoin degradation; allantoate from (S)-allantoin: step 1/1. Its function is as follows. Catalyzes the conversion of allantoin (5-ureidohydantoin) to allantoic acid by hydrolytic cleavage of the five-member hydantoin ring. The sequence is that of Allantoinase from Deinococcus radiodurans (strain ATCC 13939 / DSM 20539 / JCM 16871 / CCUG 27074 / LMG 4051 / NBRC 15346 / NCIMB 9279 / VKM B-1422 / R1).